A 433-amino-acid chain; its full sequence is Citrate synthase, mitochondrial (433 aa).

Active-site residues include H274 and H320. Position 329 (R329) interacts with oxaloacetate. The active site involves D375. Oxaloacetate-binding residues include R401 and R421.

Belongs to the citrate synthase family. In terms of assembly, homodimer.

The protein localises to the mitochondrion matrix. The enzyme catalyses oxaloacetate + acetyl-CoA + H2O = citrate + CoA + H(+). It participates in carbohydrate metabolism; tricarboxylic acid cycle; isocitrate from oxaloacetate: step 1/2. Key enzyme of the Krebs tricarboxylic acid cycle which catalyzes the synthesis of citrate from acetyl coenzyme A and oxaloacetate. The protein is Citrate synthase, mitochondrial (CS) of Gallus gallus (Chicken).